The sequence spans 586 residues: CTP synthase 2 (586 aa).

The region spanning 300-554 (SIALVGKYTK…LAATGTLNTH (255 aa)) is the Glutamine amidotransferase type-1 domain. Active-site for GATase activity residues include cysteine 399, histidine 526, and glutamate 528. A phosphoserine mark is found at serine 568, serine 571, and serine 574.

This sequence belongs to the CTP synthase family.

It catalyses the reaction UTP + L-glutamine + ATP + H2O = CTP + L-glutamate + ADP + phosphate + 2 H(+). It functions in the pathway pyrimidine metabolism; CTP biosynthesis via de novo pathway; CTP from UDP: step 2/2. Functionally, catalyzes the ATP-dependent amination of UTP to CTP with either L-glutamine or ammonia as the source of nitrogen. Constitutes the rate-limiting enzyme in the synthesis of cytosine nucleotides. This chain is CTP synthase 2 (Ctps2), found in Rattus norvegicus (Rat).